A 387-amino-acid chain; its full sequence is Phosphoglycerate kinase (387 aa).

Substrate-binding positions include 21–23 (DLN), Arg-36, and 59–62 (HLGR). Lys-84 carries the post-translational modification N6-acetyllysine. Residues Arg-113 and Arg-146 each contribute to the substrate site. Residues Lys-197, Glu-314, and 340–343 (GGDT) contribute to the ATP site.

Belongs to the phosphoglycerate kinase family. In terms of assembly, monomer.

It is found in the cytoplasm. The catalysed reaction is (2R)-3-phosphoglycerate + ATP = (2R)-3-phospho-glyceroyl phosphate + ADP. Its pathway is carbohydrate degradation; glycolysis; pyruvate from D-glyceraldehyde 3-phosphate: step 2/5. This is Phosphoglycerate kinase (pgk) from Escherichia coli O157:H7.